Here is a 356-residue protein sequence, read N- to C-terminus: D-alanine--D-alanine ligase (356 aa).

Positions 134 to 339 constitute an ATP-grasp domain; sequence KQLFAHRGLP…YADLITKLIE (206 aa). Position 167–222 (167–222) interacts with ATP; it reads KDKLEFPVFVKPANLGSSVGISKCNNEEELKSGIEEAFQFDRKLVIEQGIEAREIE. Mg(2+)-binding residues include aspartate 293, glutamate 306, and asparagine 308.

Belongs to the D-alanine--D-alanine ligase family. Mg(2+) is required as a cofactor. It depends on Mn(2+) as a cofactor.

It localises to the cytoplasm. The enzyme catalyses 2 D-alanine + ATP = D-alanyl-D-alanine + ADP + phosphate + H(+). It participates in cell wall biogenesis; peptidoglycan biosynthesis. Functionally, cell wall formation. In Staphylococcus carnosus (strain TM300), this protein is D-alanine--D-alanine ligase.